The sequence spans 148 residues: SsrA-binding protein (148 aa).

This sequence belongs to the SmpB family.

It localises to the cytoplasm. Required for rescue of stalled ribosomes mediated by trans-translation. Binds to transfer-messenger RNA (tmRNA), required for stable association of tmRNA with ribosomes. tmRNA and SmpB together mimic tRNA shape, replacing the anticodon stem-loop with SmpB. tmRNA is encoded by the ssrA gene; the 2 termini fold to resemble tRNA(Ala) and it encodes a 'tag peptide', a short internal open reading frame. During trans-translation Ala-aminoacylated tmRNA acts like a tRNA, entering the A-site of stalled ribosomes, displacing the stalled mRNA. The ribosome then switches to translate the ORF on the tmRNA; the nascent peptide is terminated with the 'tag peptide' encoded by the tmRNA and targeted for degradation. The ribosome is freed to recommence translation, which seems to be the essential function of trans-translation. This is SsrA-binding protein from Pseudothermotoga lettingae (strain ATCC BAA-301 / DSM 14385 / NBRC 107922 / TMO) (Thermotoga lettingae).